The primary structure comprises 230 residues: Probable septum site-determining protein MinC (230 aa).

This sequence belongs to the MinC family. In terms of assembly, interacts with MinD and FtsZ.

In terms of biological role, cell division inhibitor that blocks the formation of polar Z ring septums. Rapidly oscillates between the poles of the cell to destabilize FtsZ filaments that have formed before they mature into polar Z rings. Prevents FtsZ polymerization. The sequence is that of Probable septum site-determining protein MinC from Cronobacter sakazakii (strain ATCC BAA-894) (Enterobacter sakazakii).